An 80-amino-acid polypeptide reads, in one-letter code: MQQQQQQQQQQQQQQQQQQQQQQQQQQQQQQQQQQQQQQQQQQQQQQQQQQQQQQQQQQQQQQQQQQQQQQQQQQQQQQQ.

As to expression, specifically found in brains from SCA8 patients (at protein level).

The protein localises to the nucleus. The polypeptide is Ataxin-8 (ATXN8) (Homo sapiens (Human)).